Here is a 194-residue protein sequence, read N- to C-terminus: Probable GTP-binding protein EngB (194 aa).

Residues 22–194 (DLPEYALAGR…AWQFIKEGME (173 aa)) form the EngB-type G domain. Residues 30–37 (GRSNVGKS), 57–61 (GKTQT), 75–78 (DVPG), 142–145 (TKAD), and 174–176 (FSS) contribute to the GTP site. Mg(2+) is bound by residues serine 37 and threonine 59.

It belongs to the TRAFAC class TrmE-Era-EngA-EngB-Septin-like GTPase superfamily. EngB GTPase family. Requires Mg(2+) as cofactor.

Necessary for normal cell division and for the maintenance of normal septation. This chain is Probable GTP-binding protein EngB, found in Listeria monocytogenes serotype 4b (strain CLIP80459).